The sequence spans 258 residues: Acyl-[acyl-carrier-protein]--UDP-N-acetylglucosamine O-acyltransferase (258 aa).

This sequence belongs to the transferase hexapeptide repeat family. LpxA subfamily. In terms of assembly, homotrimer.

Its subcellular location is the cytoplasm. The enzyme catalyses a (3R)-hydroxyacyl-[ACP] + UDP-N-acetyl-alpha-D-glucosamine = a UDP-3-O-[(3R)-3-hydroxyacyl]-N-acetyl-alpha-D-glucosamine + holo-[ACP]. Its pathway is glycolipid biosynthesis; lipid IV(A) biosynthesis; lipid IV(A) from (3R)-3-hydroxytetradecanoyl-[acyl-carrier-protein] and UDP-N-acetyl-alpha-D-glucosamine: step 1/6. In terms of biological role, involved in the biosynthesis of lipid A, a phosphorylated glycolipid that anchors the lipopolysaccharide to the outer membrane of the cell. The chain is Acyl-[acyl-carrier-protein]--UDP-N-acetylglucosamine O-acyltransferase from Neisseria meningitidis serogroup B (strain ATCC BAA-335 / MC58).